Consider the following 131-residue polypeptide: Snaclec alboaggregin-A subunit alpha (131 aa).

The region spanning 1–131 (DCPSDWSSYD…EYPFVCKFXR (131 aa)) is the C-type lectin domain. 3 cysteine pairs are disulfide-bonded: C2/C13, C30/C127, and C102/C119.

Belongs to the snaclec family. As to quaternary structure, heterotetramer of the subunits alpha, alpha', beta and beta'; disulfide-linked. Expressed by the venom gland.

It is found in the secreted. Potent platelet activator that aggregates platelets via both GPIbalpha (GP1BA) and GPVI (GP6). Induces a tyrosine phosphorylation profile in platelets that resembles this produced by collagen, involving the time dependent tyrosine phosphorylation of Fc receptor gamma chain (FCGR1A), phospholipase Cgamma2 (PLCG2), and LAT. The protein is Snaclec alboaggregin-A subunit alpha of Trimeresurus albolabris (White-lipped pit viper).